The following is a 304-amino-acid chain: Methionyl-tRNA formyltransferase (304 aa).

106–109 (SLLP) contacts (6S)-5,6,7,8-tetrahydrofolate.

Belongs to the Fmt family.

The catalysed reaction is L-methionyl-tRNA(fMet) + (6R)-10-formyltetrahydrofolate = N-formyl-L-methionyl-tRNA(fMet) + (6S)-5,6,7,8-tetrahydrofolate + H(+). Functionally, attaches a formyl group to the free amino group of methionyl-tRNA(fMet). The formyl group appears to play a dual role in the initiator identity of N-formylmethionyl-tRNA by promoting its recognition by IF2 and preventing the misappropriation of this tRNA by the elongation apparatus. This Thermosipho africanus (strain TCF52B) protein is Methionyl-tRNA formyltransferase.